Reading from the N-terminus, the 379-residue chain is Fructose-1,6-bisphosphate aldolase/phosphatase (379 aa).

D13 acts as the Proton acceptor; for FBP phosphatase activity in catalysis. Positions 13, 20, 51, and 52 each coordinate Mg(2+). H20 is a binding site for beta-D-fructose 1,6-bisphosphate. H20 contributes to the dihydroxyacetone phosphate binding site. Residue Y89 coordinates beta-D-fructose 1,6-bisphosphate. Q93 is a binding site for Mg(2+). A beta-D-fructose 1,6-bisphosphate-binding site is contributed by G102–N103. D130 lines the Mg(2+) pocket. A beta-D-fructose 1,6-bisphosphate-binding site is contributed by K131. Position 131 (K131) interacts with dihydroxyacetone phosphate. Y227 (proton donor/acceptor; for FBP aldolase activity) is an active-site residue. Mg(2+) is bound by residues K230, D231, and D232. The Schiff-base intermediate with DHAP; for FBP aldolase activity role is filled by K230. Beta-D-fructose 1,6-bisphosphate is bound by residues Q240–S241, R264, D285, and Y346. Dihydroxyacetone phosphate contacts are provided by R264 and D285.

This sequence belongs to the FBP aldolase/phosphatase family. As to quaternary structure, homooctamer; dimer of tetramers. Mg(2+) serves as cofactor.

It carries out the reaction beta-D-fructose 1,6-bisphosphate + H2O = beta-D-fructose 6-phosphate + phosphate. It catalyses the reaction beta-D-fructose 1,6-bisphosphate = D-glyceraldehyde 3-phosphate + dihydroxyacetone phosphate. Its pathway is carbohydrate biosynthesis; gluconeogenesis. Its function is as follows. Catalyzes two subsequent steps in gluconeogenesis: the aldol condensation of dihydroxyacetone phosphate (DHAP) and glyceraldehyde-3-phosphate (GA3P) to fructose-1,6-bisphosphate (FBP), and the dephosphorylation of FBP to fructose-6-phosphate (F6P). In Moorella thermoacetica (strain ATCC 39073 / JCM 9320), this protein is Fructose-1,6-bisphosphate aldolase/phosphatase.